A 171-amino-acid chain; its full sequence is MCLQIGGGGMDLRGQTFTLEGVAASLLILLAVYTIFQSTVVIAPSWSDYANVQLKQLGYDILRVFDSDGGNSSLKGAIVNCSSGFKAPDEFNANLSKILDSLNAFGKVELIWVNGSKIESHALYGFNKTPTPDAVRVSRFVVVQDLNNSECFNLTTPTTKVVEVRLTLWRT.

Residues 21 to 43 (GVAASLLILLAVYTIFQSTVVIA) traverse the membrane as a helical segment.

The protein resides in the membrane. This is an uncharacterized protein from Archaeoglobus fulgidus (strain ATCC 49558 / DSM 4304 / JCM 9628 / NBRC 100126 / VC-16).